We begin with the raw amino-acid sequence, 132 residues long: MFLTMLKSKIHRATVTESNLNYMGSITIDEELMEAADILPNEKVQVVNNNNGARFETYVIKGPRGSGVICLNGAAARLVQPGDLVIIISYAIMDAGEARTYRPAVVMVDGRNKIVEVRQGEAHGPAGADTCP.

Residue S25 is the Schiff-base intermediate with substrate; via pyruvic acid of the active site. S25 is modified (pyruvic acid (Ser)). Residue T57 coordinates substrate. Catalysis depends on Y58, which acts as the Proton donor. 73–75 (GAA) is a substrate binding site.

It belongs to the PanD family. Heterooctamer of four alpha and four beta subunits. It depends on pyruvate as a cofactor. Is synthesized initially as an inactive proenzyme, which is activated by self-cleavage at a specific serine bond to produce a beta-subunit with a hydroxyl group at its C-terminus and an alpha-subunit with a pyruvoyl group at its N-terminus.

Its subcellular location is the cytoplasm. It carries out the reaction L-aspartate + H(+) = beta-alanine + CO2. It participates in cofactor biosynthesis; (R)-pantothenate biosynthesis; beta-alanine from L-aspartate: step 1/1. Catalyzes the pyruvoyl-dependent decarboxylation of aspartate to produce beta-alanine. The chain is Aspartate 1-decarboxylase from Pelotomaculum thermopropionicum (strain DSM 13744 / JCM 10971 / SI).